The chain runs to 908 residues: AdoMet-dependent rRNA methyltransferase SPB1 (908 aa).

S-adenosyl-L-methionine-binding residues include glycine 57, tryptophan 59, aspartate 77, aspartate 93, and aspartate 118. The active-site Proton acceptor is the lysine 158. Positions 378-422 form a coiled coil; it reads MDEEEQITEELQKLQQAKLAKTKRERKRANEKKARELLKLQLNMT. 3 disordered regions span residues 440–513, 535–715, and 806–841; these read IFDL…YDSY, NFDA…DEVK, and AKGR…EKAR. The span at 464–493 shows a compositional bias: acidic residues; that stretch reads DDGEGMDLASESEEEEDEDEEDDEVLDSDE. The segment covering 535 to 545 has biased composition (basic and acidic residues); sequence NFDAWHGIQEK. Composition is skewed to acidic residues over residues 546-564 and 579-591; these read SDEE…EEGG and DSSD…EPET. Basic and acidic residues predominate over residues 592–610; the sequence is EVPKKIKKVSFEKPARSEK. Acidic residues-rich tracts occupy residues 650-678 and 685-712; these read DGDD…EDAS and EGDD…EDQD. The segment covering 816-827 has biased composition (basic and acidic residues); it reads ARMEKAKKKADG.

This sequence belongs to the class I-like SAM-binding methyltransferase superfamily. RNA methyltransferase RlmE family. SPB1 subfamily. Component of the nucleolar and nucleoplasmic pre-60S ribosomal particle.

The protein resides in the nucleus. It localises to the nucleolus. The catalysed reaction is a ribonucleotide in rRNA + S-adenosyl-L-methionine = a 2'-O-methylribonucleotide in rRNA + S-adenosyl-L-homocysteine + H(+). Functionally, required for proper assembly of pre-ribosomal particles during the biogenesis of the 60S ribosomal subunit. In Cryptococcus neoformans var. neoformans serotype D (strain B-3501A) (Filobasidiella neoformans), this protein is AdoMet-dependent rRNA methyltransferase SPB1.